Reading from the N-terminus, the 193-residue chain is Flagellin B3 (193 aa).

A propeptide spanning residues 1-12 is cleaved from the precursor; that stretch reads MFEFITDEDERG.

The protein belongs to the archaeal flagellin family. Glycosylated.

It localises to the archaeal flagellum. Flagellin is the subunit protein which polymerizes to form the filaments of archaeal flagella. This is Flagellin B3 (flaB3) from Halobacterium salinarum (strain ATCC 700922 / JCM 11081 / NRC-1) (Halobacterium halobium).